A 158-amino-acid polypeptide reads, in one-letter code: MQITIKKLQDLLSSVQRKKIQTLKLKQGKFELLLNKTYKKVNQEIIPSQKSAVLQNSPSTIIKSINNTKKIFCVNEDRTEYATIVSPMVGTFYHSPAPGEKIFVQVGDEVKFNQTVCIIEAMKLMNEIEAEIEGKIIEILVKDGDIVDCGQALMKVET.

The Biotinyl-binding domain maps to 81 to 157 (YATIVSPMVG…DCGQALMKVE (77 aa)). Position 123 is an N6-biotinyllysine (Lys-123).

It is found in the plastid. It localises to the chloroplast. The protein operates within lipid metabolism; fatty acid biosynthesis. Its function is as follows. This protein is a component of the acetyl coenzyme A carboxylase complex; first, biotin carboxylase catalyzes the carboxylation of the carrier protein and then the transcarboxylase transfers the carboxyl group to form malonyl-CoA. The sequence is that of Biotin carboxyl carrier protein of acetyl-CoA carboxylase (accB) from Pyropia yezoensis (Susabi-nori).